The chain runs to 277 residues: Type II restriction enzyme RsrI (277 aa).

This sequence belongs to the EcoRI type II restriction endonuclease family. Homodimer. Mg(2+) serves as cofactor.

It catalyses the reaction Endonucleolytic cleavage of DNA to give specific double-stranded fragments with terminal 5'-phosphates.. Its function is as follows. A P subtype restriction enzyme that recognizes the double-stranded sequence 5'-GAATTC-3' and cleaves after G-1. This chain is Type II restriction enzyme RsrI (rsrIR), found in Cereibacter sphaeroides (Rhodobacter sphaeroides).